A 757-amino-acid polypeptide reads, in one-letter code: Protein lsd90 (757 aa).

Composition is skewed to polar residues over residues 1–11 (MVGTINESMQN), 19–36 (TAQS…SSSK), 51–69 (TAGN…SKNL), and 94–118 (DTSN…STYE). 4 disordered regions span residues 1–131 (MVGT…SRSS), 224–244 (ERAR…EKQA), 589–633 (AQAE…KSKS), and 657–757 (AYVG…MSNK). A coiled-coil region spans residues 166-604 (DEKTLQDLLE…KVESEYNSVK (439 aa)). Basic and acidic residues predominate over residues 589–598 (AQAEQSKVES). Residues 619–632 (VTTNEPTDVSTKSK) show a composition bias toward polar residues. Residues 674–693 (STPSTLPTSASTNAAATTTT) show a composition bias toward low complexity. Residue 718-725 (GTTGLGKS) coordinates ATP.

In terms of biological role, may be involved in the metabolism of very long-chain fatty acid-containing phospholipids (VLCFA-PL). In Schizosaccharomyces pombe (strain 972 / ATCC 24843) (Fission yeast), this protein is Protein lsd90 (lsd90).